A 186-amino-acid polypeptide reads, in one-letter code: Ribosome-recycling factor (186 aa).

The protein belongs to the RRF family.

The protein resides in the cytoplasm. Its function is as follows. Responsible for the release of ribosomes from messenger RNA at the termination of protein biosynthesis. May increase the efficiency of translation by recycling ribosomes from one round of translation to another. The polypeptide is Ribosome-recycling factor (Leptothrix cholodnii (strain ATCC 51168 / LMG 8142 / SP-6) (Leptothrix discophora (strain SP-6))).